The sequence spans 55 residues: Cicadin (55 aa).

The segment covering 1–26 (NEYHGFVDKANNENKRKKQQGRDDFV) has biased composition (basic and acidic residues). A disordered region spans residues 1–39 (NEYHGFVDKANNENKRKKQQGRDDFVVKPNNFANRRRKD).

Its function is as follows. Possesses antifungal activity against B.cinerea, M.arachidicola, F.oxysporum, R.solani and C.comatus. Functionally, suppresses the activity of HIV-1 reverse transcriptase and stimulates the proliferation of murine splenocytes. The chain is Cicadin from Cicada flammata.